The following is a 107-amino-acid chain: Large ribosomal subunit protein uL24 (107 aa).

The protein belongs to the universal ribosomal protein uL24 family. In terms of assembly, part of the 50S ribosomal subunit.

In terms of biological role, one of two assembly initiator proteins, it binds directly to the 5'-end of the 23S rRNA, where it nucleates assembly of the 50S subunit. One of the proteins that surrounds the polypeptide exit tunnel on the outside of the subunit. This chain is Large ribosomal subunit protein uL24, found in Thiobacillus denitrificans (strain ATCC 25259 / T1).